We begin with the raw amino-acid sequence, 459 residues long: V-type ATP synthase beta chain (459 aa).

The protein belongs to the ATPase alpha/beta chains family.

Functionally, produces ATP from ADP in the presence of a proton gradient across the membrane. The V-type beta chain is a regulatory subunit. The sequence is that of V-type ATP synthase beta chain from Thermoanaerobacter sp. (strain X514).